A 92-amino-acid chain; its full sequence is DNA-directed RNA polymerase subunit Rpo11 (92 aa).

The protein belongs to the archaeal Rpo11/eukaryotic RPB11/RPC19 RNA polymerase subunit family. Part of the 13-subunit RNA polymerase complex.

Its subcellular location is the cytoplasm. The enzyme catalyses RNA(n) + a ribonucleoside 5'-triphosphate = RNA(n+1) + diphosphate. Its function is as follows. DNA-dependent RNA polymerase (RNAP) catalyzes the transcription of DNA into RNA using the four ribonucleoside triphosphates as substrates. The sequence is that of DNA-directed RNA polymerase subunit Rpo11 from Saccharolobus solfataricus (strain ATCC 35092 / DSM 1617 / JCM 11322 / P2) (Sulfolobus solfataricus).